We begin with the raw amino-acid sequence, 464 residues long: NADH-quinone oxidoreductase subunit N (464 aa).

The next 13 membrane-spanning stretches (helical) occupy residues 5–25 (MLLA…VLFL), 31–51 (LLSA…PASL), 63–83 (LFAR…CLLS), 96–116 (EYAA…ASTS), 117–137 (LVSL…LIAV), 152–172 (LLPG…VYAA), 188–208 (GAPM…AAAF), 242–262 (VFAV…RPLL), 286–303 (MLAY…LAVL), 312–332 (AGLF…GLLA), 358–378 (AVLL…AGFM), 393–415 (VGLV…RPVL), and 436–456 (LIFV…GPFF).

It belongs to the complex I subunit 2 family. As to quaternary structure, NDH-1 is composed of 14 different subunits. Subunits NuoA, H, J, K, L, M, N constitute the membrane sector of the complex.

Its subcellular location is the cell inner membrane. The enzyme catalyses a quinone + NADH + 5 H(+)(in) = a quinol + NAD(+) + 4 H(+)(out). Its function is as follows. NDH-1 shuttles electrons from NADH, via FMN and iron-sulfur (Fe-S) centers, to quinones in the respiratory chain. The immediate electron acceptor for the enzyme in this species is believed to be ubiquinone. Couples the redox reaction to proton translocation (for every two electrons transferred, four hydrogen ions are translocated across the cytoplasmic membrane), and thus conserves the redox energy in a proton gradient. This chain is NADH-quinone oxidoreductase subunit N, found in Syntrophotalea carbinolica (strain DSM 2380 / NBRC 103641 / GraBd1) (Pelobacter carbinolicus).